A 268-amino-acid chain; its full sequence is MEMO1 family protein Ta0237 (268 aa).

This sequence belongs to the MEMO1 family.

This Thermoplasma acidophilum (strain ATCC 25905 / DSM 1728 / JCM 9062 / NBRC 15155 / AMRC-C165) protein is MEMO1 family protein Ta0237.